The sequence spans 366 residues: MVFNMNLKEQAMSLFYESGFPKDFFSFLWITASILILVSGVVIGVLVIVWLERKISAGIQQRIGPEYAGPLGIIQALADGTKLLLKEDIIPSRGDALLFSIGPAIVVIPVLLSYLVIPFGHNIILADLNIGVFFWIAVSSIAPLGLFMAGYGSNNKYSFLGGLRAVAQAISYEIPLALCVLSISLLSNSLSTVDIVEIQSKFGFWGWNVWRQPIGFIAFLIASLAECERLPFDLPEAEEELVAGYQTEYSGIKFGLFYVASYLNLLVSSLFVTVLYLGGWNLSIPFLPNFPYLEWKFTAETSEVINVIIGIIITLAKAYSFLFISIVTRWTLPRVRMDQLLNLGWKFLLPIALGNLLLTASFQLIA.

Helical transmembrane passes span 29–49 (WITASILILVSGVVIGVLVIV), 97–117 (LLFSIGPAIVVIPVLLSYLVI), 130–150 (IGVFFWIAVSSIAPLGLFMAG), 166–186 (VAQAISYEIPLALCVLSISLL), 202–222 (FGFWGWNVWRQPIGFIAFLIA), 254–274 (FGLFYVASYLNLLVSSLFVTV), 307–327 (VIIGIIITLAKAYSFLFISIV), and 340–360 (LLNLGWKFLLPIALGNLLLTA).

This sequence belongs to the complex I subunit 1 family. NDH is composed of at least 16 different subunits, 5 of which are encoded in the nucleus.

The protein resides in the plastid. It is found in the chloroplast thylakoid membrane. It carries out the reaction a plastoquinone + NADH + (n+1) H(+)(in) = a plastoquinol + NAD(+) + n H(+)(out). The enzyme catalyses a plastoquinone + NADPH + (n+1) H(+)(in) = a plastoquinol + NADP(+) + n H(+)(out). Its function is as follows. NDH shuttles electrons from NAD(P)H:plastoquinone, via FMN and iron-sulfur (Fe-S) centers, to quinones in the photosynthetic chain and possibly in a chloroplast respiratory chain. The immediate electron acceptor for the enzyme in this species is believed to be plastoquinone. Couples the redox reaction to proton translocation, and thus conserves the redox energy in a proton gradient. The sequence is that of NAD(P)H-quinone oxidoreductase subunit 1, chloroplastic from Anthoceros angustus (Hornwort).